Consider the following 508-residue polypeptide: Photosystem II CP47 reaction center protein (508 aa).

The next 6 membrane-spanning stretches (helical) occupy residues serine 21 to serine 36, isoleucine 101 to tryptophan 115, glycine 140 to phenylalanine 156, isoleucine 203 to serine 218, valine 237 to valine 252, and serine 457 to arginine 472.

It belongs to the PsbB/PsbC family. PsbB subfamily. PSII is composed of 1 copy each of membrane proteins PsbA, PsbB, PsbC, PsbD, PsbE, PsbF, PsbH, PsbI, PsbJ, PsbK, PsbL, PsbM, PsbT, PsbX, PsbY, PsbZ, Psb30/Ycf12, at least 3 peripheral proteins of the oxygen-evolving complex and a large number of cofactors. It forms dimeric complexes. The cofactor is Binds multiple chlorophylls. PSII binds additional chlorophylls, carotenoids and specific lipids..

The protein localises to the plastid. Its subcellular location is the chloroplast thylakoid membrane. Functionally, one of the components of the core complex of photosystem II (PSII). It binds chlorophyll and helps catalyze the primary light-induced photochemical processes of PSII. PSII is a light-driven water:plastoquinone oxidoreductase, using light energy to abstract electrons from H(2)O, generating O(2) and a proton gradient subsequently used for ATP formation. This Aethionema grandiflorum (Persian stone-cress) protein is Photosystem II CP47 reaction center protein.